The following is a 465-amino-acid chain: Glutamate--tRNA ligase (465 aa).

The short motif at 8–18 (PSPTGYLHIGG) is the 'HIGH' region element. The 'KMSKS' region motif lies at 236–240 (RLSKR). Residue K239 coordinates ATP.

Belongs to the class-I aminoacyl-tRNA synthetase family. Glutamate--tRNA ligase type 1 subfamily. As to quaternary structure, monomer.

It is found in the cytoplasm. The enzyme catalyses tRNA(Glu) + L-glutamate + ATP = L-glutamyl-tRNA(Glu) + AMP + diphosphate. Functionally, catalyzes the attachment of glutamate to tRNA(Glu) in a two-step reaction: glutamate is first activated by ATP to form Glu-AMP and then transferred to the acceptor end of tRNA(Glu). The chain is Glutamate--tRNA ligase from Nitrosospira multiformis (strain ATCC 25196 / NCIMB 11849 / C 71).